We begin with the raw amino-acid sequence, 802 residues long: Mitogen-activated protein kinase kinase kinase 20 (802 aa).

N-acetylserine is present on serine 2. Phosphoserine is present on residues serine 2, serine 3, and serine 7. Residues 16-277 enclose the Protein kinase domain; the sequence is LQFFENCGGG…NLPDQCNSFL (262 aa). ATP contacts are provided by residues 22-30 and lysine 45; that span reads CGGGSFGSV. The active-site Proton acceptor is the aspartate 133. Threonine 161 carries the post-translational modification Phosphothreonine; by autocatalysis. Phosphoserine; by autocatalysis is present on serine 165. A phosphoserine mark is found at serine 275 and serine 302. Residues 287–308 are leucine-zipper; that stretch reads IEATLERLKKLERDLSFKEQEL. One can recognise an SAM domain in the interval 339-410; sequence WTEDDVYFWV…KSAIEKLTHD (72 aa). 3 positions are modified to phosphoserine: lysine 434, glutamine 453, and serine 567. Threonine 586 carries the post-translational modification Phosphothreonine. Residues serine 587, serine 593, and serine 599 each carry the phosphoserine modification. Over residues 624-642 the composition is skewed to polar residues; sequence YQQITPSINPSRSSSPTQY. A disordered region spans residues 624 to 802; sequence YQQITPSINP…RGNYRGRRNF (179 aa). A Phosphothreonine modification is found at threonine 628. Phosphoserine is present on residues serine 634, serine 638, serine 649, serine 650, and serine 661. Residues 643–666 show a composition bias toward low complexity; the sequence is GLSRNFSSLNLSSRDSGFSSLNDS. Basic and acidic residues predominate over residues 667–678; sequence SSERGRYSDRSR. The tract at residues 670–713 is sensing domain (S); that stretch reads RGRYSDRSRNKYYRGSVSLNSSPKGRYGGKSQHSTPSRERYSGK. Phosphoserine is present on residues serine 685, serine 720, serine 727, and serine 733. Residues 728-741 show a composition bias toward basic and acidic residues; sequence PDFKRSPNDHDRRV. The residue at position 744 (threonine 744) is a Phosphothreonine. The C-terminal domain (CTD) stretch occupies residues 776–802; it reads RKKTHRQLSAKTSKERTRGNYRGRRNF.

This sequence belongs to the protein kinase superfamily. STE Ser/Thr protein kinase family. MAP kinase kinase kinase subfamily. As to quaternary structure, homodimer. Interacts with ZNF33A. Component of a signaling complex containing at least AKAP13, PKN1, MAPK14, MAP3K20 and MAP2K3. Within this complex, AKAP13 interacts directly with PKN1, which in turn recruits MAPK14, MAP2K3 and MAP3K20. Interacts with EIF2AK4/GCN2; promoting EIF2AK4/GCN2 kinase activity. Interacts with isoform ZAKbeta. In terms of assembly, interacts with isoform ZAKalpha. It depends on Mg(2+) as a cofactor. Post-translationally, activated by phosphorylation by PKN1, followed by autophosphorylation on Thr-161 and Ser-165. Autophosphorylation in response to ribotoxic stress promotes dissociation from colliding ribosomes and activation.

It is found in the cytoplasm. The protein resides in the nucleus. The catalysed reaction is L-seryl-[protein] + ATP = O-phospho-L-seryl-[protein] + ADP + H(+). It carries out the reaction L-threonyl-[protein] + ATP = O-phospho-L-threonyl-[protein] + ADP + H(+). Its activity is regulated as follows. Activated in response to stress, such as ribosomal stress, osmotic shock and ionizing radiation. Activated by phosphorylation by PKN1, followed by autophosphorylation on Thr-161 and Ser-165. Its function is as follows. Stress-activated component of a protein kinase signal transduction cascade that promotes programmed cell death in response to various stress, such as ribosomal stress, osmotic shock and ionizing radiation. Acts by catalyzing phosphorylation of MAP kinase kinases, leading to activation of the JNK (MAPK8/JNK1, MAPK9/JNK2 and/or MAPK10/JNK3) and MAP kinase p38 (MAPK11, MAPK12, MAPK13 and/or MAPK14) pathways. Activates JNK through phosphorylation of MAP2K4/MKK4 and MAP2K7/MKK7, and MAP kinase p38 gamma (MAPK12) via phosphorylation of MAP2K3/MKK3 and MAP2K6/MKK6. Involved in stress associated with adrenergic stimulation: contributes to cardiac decompensation during periods of acute cardiac stress. May be involved in regulation of S and G2 cell cycle checkpoint by mediating phosphorylation of CHEK2. Key component of the stress-activated protein kinase signaling cascade in response to ribotoxic stress or UV-B irradiation. Acts as the proximal sensor of ribosome collisions during the ribotoxic stress response (RSR). Directly binds to the ribosome by inserting its flexible C-terminus into the ribosomal intersubunit space, thereby acting as a sentinel for colliding ribosomes. Upon ribosome collisions, activates either the stress-activated protein kinase signal transduction cascade or the integrated stress response (ISR), leading to programmed cell death or cell survival, respectively. Dangerous levels of ribosome collisions trigger the autophosphorylation and activation of MAP3K20, which dissociates from colliding ribosomes and phosphorylates MAP kinase kinases, leading to activation of the JNK and MAP kinase p38 pathways that promote programmed cell death. Less dangerous levels of ribosome collisions trigger the integrated stress response (ISR): MAP3K20 activates EIF2AK4/GCN2 independently of its protein-kinase activity, promoting EIF2AK4/GCN2-mediated phosphorylation of EIF2S1/eIF-2-alpha. Also acts as a histone kinase by phosphorylating histone H3 at 'Ser-28' (H3S28ph). In terms of biological role, isoform that lacks the C-terminal region that mediates ribosome-binding: does not act as a sensor of ribosome collisions in response to ribotoxic stress. May act as an antagonist of isoform ZAKalpha: interacts with isoform ZAKalpha, leading to decrease the expression of isoform ZAKalpha. In Mus musculus (Mouse), this protein is Mitogen-activated protein kinase kinase kinase 20.